We begin with the raw amino-acid sequence, 331 residues long: Proline-rich protein 33 (331 aa).

3 disordered regions span residues 1 to 112 (MGPQ…SVPR), 128 to 185 (SLES…PKVA), and 204 to 247 (APEP…APAS). Residues 94–105 (PEEPPVPRPPPG) show a composition bias toward pro residues. Positions 149–169 (PPMAGPAAEAERVSSPAWASS) are enriched in low complexity. Residues 170–185 (PTPPSGPHPCPVPKVA) are compositionally biased toward pro residues. A compositionally biased stretch (low complexity) spans 217–238 (EPEVPTPTEQEVPAPTEQEVPA).

The sequence is that of Proline-rich protein 33 (PRR33) from Homo sapiens (Human).